A 259-amino-acid polypeptide reads, in one-letter code: Putative hydro-lyase Rxyl_2409 (259 aa).

Positions 1-24 (MGAPGAAEARERIRRGEHAGPTAG) are disordered. Over residues 8 to 18 (EARERIRRGEH) the composition is skewed to basic and acidic residues.

It belongs to the D-glutamate cyclase family.

This Rubrobacter xylanophilus (strain DSM 9941 / JCM 11954 / NBRC 16129 / PRD-1) protein is Putative hydro-lyase Rxyl_2409.